The following is a 380-amino-acid chain: 1-deoxy-D-xylulose 5-phosphate reductoisomerase (380 aa).

Residues Ser-10, Gly-11, Ser-12, Ile-13, Gly-36, Lys-37, Asn-38, and Asn-120 each coordinate NADPH. Residue Lys-121 coordinates 1-deoxy-D-xylulose 5-phosphate. Position 122 (Glu-122) interacts with NADPH. Residue Asp-146 coordinates Mn(2+). 1-deoxy-D-xylulose 5-phosphate-binding residues include Ser-147, Glu-148, Ser-172, and His-195. Glu-148 serves as a coordination point for Mn(2+). NADPH is bound at residue Gly-201. Residues Ser-208, Asn-213, Lys-214, and Glu-217 each coordinate 1-deoxy-D-xylulose 5-phosphate. Glu-217 serves as a coordination point for Mn(2+).

Belongs to the DXR family. The cofactor is Mg(2+). Mn(2+) is required as a cofactor.

It catalyses the reaction 2-C-methyl-D-erythritol 4-phosphate + NADP(+) = 1-deoxy-D-xylulose 5-phosphate + NADPH + H(+). Its pathway is isoprenoid biosynthesis; isopentenyl diphosphate biosynthesis via DXP pathway; isopentenyl diphosphate from 1-deoxy-D-xylulose 5-phosphate: step 1/6. Its function is as follows. Catalyzes the NADPH-dependent rearrangement and reduction of 1-deoxy-D-xylulose-5-phosphate (DXP) to 2-C-methyl-D-erythritol 4-phosphate (MEP). The polypeptide is 1-deoxy-D-xylulose 5-phosphate reductoisomerase (Bacillus cereus (strain AH187)).